The sequence spans 389 residues: Dirigent protein 25 (389 aa).

An N-terminal signal peptide occupies residues 1–21 (MAGCKVLFFLILALAITFVSA). Composition is skewed to low complexity over residues 50–68 (GPFP…SGTG), 77–86 (LGTNTGPGPL), and 98–135 (SSGT…PLPT). Residues 50–135 (GPFPTANSGP…PGSGSGPLPT (86 aa)) are disordered.

It belongs to the plant dirigent protein family. In terms of assembly, homodimer.

The protein resides in the secreted. It is found in the extracellular space. The protein localises to the apoplast. In terms of biological role, dirigent proteins impart stereoselectivity on the phenoxy radical-coupling reaction, yielding optically active lignans from two molecules of coniferyl alcohol in the biosynthesis of lignans, flavonolignans, and alkaloids and thus plays a central role in plant secondary metabolism. The chain is Dirigent protein 25 (DIR25) from Arabidopsis thaliana (Mouse-ear cress).